Reading from the N-terminus, the 805-residue chain is MSYKHIEIEKKWQRYWEEHKTFKTTEDDDKKNYYALDMFPYPSGQGLHVGHPEGYTATDIMARMKRMQGYNVLHPMGWDAFGLPAEQYALNTGNSPREFTKKNVNNFRRQIKSLGLSYDWDREVNTTDPAYYKWTQWIFEQLYKKGLAYEAEVPVNWSPDLGTVVANEEVIDGKTERGGFPVIRKPMRQWVLKITAYADRLIDDLDDLDWPEAIKEQQRNWIGRSVGAAINFPVSGDENTKIEVFSTRPDTIFGVAALVLAPEHELVKQLTTPEHENEVEAYIEKISHKSDLERTDLAKDKTGVFTGSYVVNPVSGEKLPIWIADYVLNSYGTGAVMVVPAHDERDHEFAQKFDLPIVQVIEGGDVQKEAYTGDGVHINSDFLNGMDKEEAIDAINNWLEENGVGEKKVNYRLRDWLFSRQRYWGEPIPVIHWEDGETTLVPEDELPLYLPKATDIKPSGTGESPLANLDDWVNVVDENGRKGRRETNTMPQWAGSSWYFLRYIDPHNNHEIADYEKLKEWLPVNLYVGGAEHAVLHLLYARFWHKFLYDLGVVPTKEPFQKLVNQGMILGSNHEKMSKSKGNVVNPDDIVEQYGADTLRLYEMFMGPLDASIPWSEEGLGGAHKFINRVWNLLIDENDNLRDRVTTINNHDLDKIYNETVKKVTEDYEAMHFNTAISQLMVFVNNAYKADSLPLEYVEGLVKLLSPVVPHITEELWSKLGHVGSIAYAKWPTYDESKLVEDVVEIVVQINGKVRQHLQVSKDASREELQALALNDERIKQELADKEVKKVIAVPGKLVSIVVAK.

The 'HIGH' region motif lies at 40-51 (PYPSGQGLHVGH). Residues 576–580 (KMSKS) carry the 'KMSKS' region motif. Lysine 579 contributes to the ATP binding site.

The protein belongs to the class-I aminoacyl-tRNA synthetase family.

It is found in the cytoplasm. It carries out the reaction tRNA(Leu) + L-leucine + ATP = L-leucyl-tRNA(Leu) + AMP + diphosphate. This chain is Leucine--tRNA ligase, found in Ligilactobacillus salivarius (strain UCC118) (Lactobacillus salivarius).